The following is a 358-amino-acid chain: Biotin synthase (358 aa).

The Radical SAM core domain occupies 55–278 (NKVRIHILDN…VNPDSEIRIA (224 aa)). 3 residues coordinate [4Fe-4S] cluster: Cys-70, Cys-74, and Cys-77. [2Fe-2S] cluster contacts are provided by Cys-114, Cys-146, Cys-206, and Arg-276.

This sequence belongs to the radical SAM superfamily. Biotin synthase family. As to quaternary structure, homodimer. It depends on [4Fe-4S] cluster as a cofactor. [2Fe-2S] cluster is required as a cofactor.

The enzyme catalyses (4R,5S)-dethiobiotin + (sulfur carrier)-SH + 2 reduced [2Fe-2S]-[ferredoxin] + 2 S-adenosyl-L-methionine = (sulfur carrier)-H + biotin + 2 5'-deoxyadenosine + 2 L-methionine + 2 oxidized [2Fe-2S]-[ferredoxin]. The protein operates within cofactor biosynthesis; biotin biosynthesis; biotin from 7,8-diaminononanoate: step 2/2. In terms of biological role, catalyzes the conversion of dethiobiotin (DTB) to biotin by the insertion of a sulfur atom into dethiobiotin via a radical-based mechanism. The sequence is that of Biotin synthase from Leptospira borgpetersenii serovar Hardjo-bovis (strain JB197).